Here is a 634-residue protein sequence, read N- to C-terminus: Chaperone protein DnaK (634 aa).

T198 bears the Phosphothreonine; by autocatalysis mark. A disordered region spans residues 599-634 (KQTQEGAEAASEAGEQSAGDEGVVDAEFEEVDEQNK). A compositionally biased stretch (low complexity) spans 602–619 (QEGAEAASEAGEQSAGDE). Residues 620 to 634 (GVVDAEFEEVDEQNK) are compositionally biased toward acidic residues.

Belongs to the heat shock protein 70 family.

Its function is as follows. Acts as a chaperone. The sequence is that of Chaperone protein DnaK from Syntrophotalea carbinolica (strain DSM 2380 / NBRC 103641 / GraBd1) (Pelobacter carbinolicus).